We begin with the raw amino-acid sequence, 280 residues long: Antiactivator FleN (280 aa).

Residues 19-26 (KGGVGKTN), Glu-153, Asn-181, 215-217 (PYD), and Arg-221 each bind ATP.

It belongs to the ParA family. In terms of assembly, forms homodimers. Interacts with FleQ.

With respect to regulation, ATP-binding allows dimerization and subsequent antagonistic effect against FleQ. In terms of biological role, ATPase that plays an important role in maintaining flagellar number in Pseudomonas aeruginosa. Exhibits anti-activator activity against FleQ, the global transcriptional regulator of flagellar genes. This is Antiactivator FleN from Pseudomonas aeruginosa (strain ATCC 15692 / DSM 22644 / CIP 104116 / JCM 14847 / LMG 12228 / 1C / PRS 101 / PAO1).